The primary structure comprises 484 residues: Glutamate--tRNA ligase (484 aa).

A 'HIGH' region motif is present at residues 9–19 (PSPTGNLHIGT). 4 residues coordinate Zn(2+): C98, C100, H125, and H127. Residues 250–254 (KLSKR) carry the 'KMSKS' region motif. ATP is bound at residue K253.

This sequence belongs to the class-I aminoacyl-tRNA synthetase family. Glutamate--tRNA ligase type 1 subfamily. In terms of assembly, monomer. Requires Zn(2+) as cofactor.

It is found in the cytoplasm. It carries out the reaction tRNA(Glu) + L-glutamate + ATP = L-glutamyl-tRNA(Glu) + AMP + diphosphate. Catalyzes the attachment of glutamate to tRNA(Glu) in a two-step reaction: glutamate is first activated by ATP to form Glu-AMP and then transferred to the acceptor end of tRNA(Glu). This Crocosphaera subtropica (strain ATCC 51142 / BH68) (Cyanothece sp. (strain ATCC 51142)) protein is Glutamate--tRNA ligase.